The primary structure comprises 846 residues: DNA mismatch repair protein MutS (846 aa).

ATP is bound at residue 594-601 (GPNMSGKS).

The protein belongs to the DNA mismatch repair MutS family.

This protein is involved in the repair of mismatches in DNA. It is possible that it carries out the mismatch recognition step. This protein has a weak ATPase activity. The polypeptide is DNA mismatch repair protein MutS (Macrococcus caseolyticus (strain JCSC5402) (Macrococcoides caseolyticum)).